A 205-amino-acid polypeptide reads, in one-letter code: Ras-related protein Rab-1A (205 aa).

At S2 the chain carries N-acetylserine. Residues S20, G21, G23, K24, S25, C26, E38, and T43 each coordinate GTP. S25 serves as a coordination point for Mg(2+). A Switch 1 motif is present at residues 34-48; it reads DTYTESYISTIGVDF. T43 contributes to the Mg(2+) binding site. Residues K49 and K61 each participate in a glycyl lysine isopeptide (Lys-Gly) (interchain with G-Cter in ubiquitin) cross-link. D66 contacts Mg(2+). The Switch 2 signature appears at 66 to 83; it reads DTAGQERFRTITSSYYRG. Residues G69, N124, K125, D127, A155, and K156 each contribute to the GTP site. The segment at 178–205 is disordered; it reads PGATAGGAEKSNVKIQSTPVKQSGGGCC. At S194 the chain carries Phosphoserine. 2 S-geranylgeranyl cysteine lipidation sites follow: C204 and C205.

The protein belongs to the small GTPase superfamily. Rab family. As to quaternary structure, may interact with YIPF5. Interacts with C9orf72; the interaction mediates recruitment of RAB1A to the ATG1/ULK1 kinase complex. Interacts with GDI1; this promotes dissociation from membranes. Mg(2+) serves as cofactor. In terms of processing, phosphorylated by CDK1 kinase during mitosis. Ubiquitinated via 'Lys-11'-linked ubiquitination on Lys-49 and Lys-61; impairing the recruitment of guanosine diphosphate (GDP) dissociation inhibitor 1/GDI1.

The protein localises to the golgi apparatus. It localises to the endoplasmic reticulum. The protein resides in the early endosome. Its subcellular location is the cytoplasm. It is found in the cytosol. The protein localises to the membrane. It localises to the melanosome. It carries out the reaction GTP + H2O = GDP + phosphate + H(+). Regulated by guanine nucleotide exchange factors (GEFs) which promote the exchange of bound GDP for free GTP. Regulated by GTPase activating proteins (GAPs) which increase the GTP hydrolysis activity. Inhibited by GDP dissociation inhibitors (GDIs). In terms of biological role, the small GTPases Rab are key regulators of intracellular membrane trafficking, from the formation of transport vesicles to their fusion with membranes. Rabs cycle between an inactive GDP-bound form and an active GTP-bound form that is able to recruit to membranes different sets of downstream effectors directly responsible for vesicle formation, movement, tethering and fusion. RAB1A regulates vesicular protein transport from the endoplasmic reticulum (ER) to the Golgi compartment and on to the cell surface, and plays a role in IL-8 and growth hormone secretion. Required to modulate the compacted morphology of the Golgi. Regulates the level of CASR present at the cell membrane. Plays a role in cell adhesion and cell migration, via its role in protein trafficking. Plays a role in autophagosome assembly and cellular defense reactions against pathogenic bacteria. Plays a role in microtubule-dependent protein transport by early endosomes and in anterograde melanosome transport. This is Ras-related protein Rab-1A (RAB1A) from Canis lupus familiaris (Dog).